The primary structure comprises 369 residues: MTQNTAIPMVDLRAHFAPLRDEILTGIGKILDDASFILGNQGRALEAEVAGLSGVAHGVGCASGTDALMLALRALEIGPGDEVIVPTFTFIATAEAVLYVGATPVFVDVDDRFYAMTIAGIEAAITPRTKAIIPVHLYGLPADMPGIMALAQKHGLRVIEDCAQAIGAQINGQGVGSFGDIGCFSFFPSKNLGAAGDGGMVVTADAELERKLRGLRNHGSWQTYHHDVLGYNSRLDEMQAVILRAEFPHLAAYNDGRRRAAGWYAEHLVGLDLQLPEAPAGYHHVFHQFTIQLNARDAVKTALHAEGIASAIYYPIPGHQQKMFAHQAQTHCPVAEHLAERVLSLPMFPELREEQIARIATVIRRTLHG.

The residue at position 190 (lysine 190) is an N6-(pyridoxal phosphate)lysine.

Belongs to the DegT/DnrJ/EryC1 family. It depends on pyridoxal 5'-phosphate as a cofactor.

It catalyses the reaction UDP-2-acetamido-3-amino-2,3-dideoxy-alpha-D-glucopyranose + 2-oxoglutarate = UDP-2-acetamido-3-dehydro-2-deoxy-alpha-D-glucopyranose + L-glutamate. Its pathway is bacterial outer membrane biogenesis; LPS lipid A biosynthesis. Aminotranferase involved in the synthesis of 2,3-diamino-2,3-dideoxy-D-glucopyranose (GlcN3N), which is a component of lipid A in some species. Catalyzes the amination of UDP-2-acetamido-3-dehydro-2-deoxy-alpha-D-glucopyranose (UDP-3-oxo-GlcNAc) to UDP-2-acetamido-3-amino-2,3-dideoxy-alpha-D-glucopyranose (UDP-GlcNAc3N), using L-glutamate as the amine donor. Other amine donors, such as alanine and glutamine, can substitute for glutamate, but product formation is slower. This is UDP-N-acetyl-3-dehydro-alpha-D-glucosamine 3-aminotranferase from Acidithiobacillus ferrooxidans (strain ATCC 23270 / DSM 14882 / CIP 104768 / NCIMB 8455) (Ferrobacillus ferrooxidans (strain ATCC 23270)).